The primary structure comprises 267 residues: tRNA pseudouridine synthase A (267 aa).

Catalysis depends on Asp51, which acts as the Nucleophile. Substrate is bound at residue Tyr109.

This sequence belongs to the tRNA pseudouridine synthase TruA family. As to quaternary structure, homodimer.

It carries out the reaction uridine(38/39/40) in tRNA = pseudouridine(38/39/40) in tRNA. In terms of biological role, formation of pseudouridine at positions 38, 39 and 40 in the anticodon stem and loop of transfer RNAs. The chain is tRNA pseudouridine synthase A from Staphylococcus aureus (strain bovine RF122 / ET3-1).